The primary structure comprises 416 residues: Phosphatidylinositol 5-phosphate 4-kinase type-2 beta (416 aa).

Ser-2 is subject to N-acetylserine. Thr-8 bears the Phosphothreonine mark. Position 19 is a phosphoserine (Ser-19). Residues 38 to 415 (ASEPILSVLM…RFNEFMSNIL (378 aa)) enclose the PIPK domain. Residues 64 to 70 (VMLMPDD) form a required for interaction with PIP5K1A region. N6-acetyllysine occurs at positions 94 and 150. ATP-binding positions include 202–204 (RNV) and Lys-214. Residues 203 to 204 (NV) and Lys-214 each bind GTP. The residue at position 322 (Thr-322) is a Phosphothreonine. Phosphoserine is present on Ser-326. Residue Asp-369 participates in GTP binding.

As to quaternary structure, homodimer. Binds TNFRSF1A. Interacts with PIP4K2A; the interaction suppresses ubiquitination by the SPOP/CUL3 complex. Probably interacts with PIP5K1A; the interaction inhibits PIP5K1A kinase activity. In terms of processing, ubiquitinated by the SPOP/CUL3 complex. Ubiquitination is stimulated by PtdIns5P levels. Phosphorylated on serine residues.

It is found in the endoplasmic reticulum membrane. It localises to the cell membrane. The protein resides in the nucleus. The protein localises to the cytoplasm. It catalyses the reaction a 1,2-diacyl-sn-glycero-3-phospho-(1D-myo-inositol-5-phosphate) + ATP = a 1,2-diacyl-sn-glycero-3-phospho-(1D-myo-inositol-4,5-bisphosphate) + ADP + H(+). The enzyme catalyses 1,2-dihexadecanoyl-sn-glycero-3-phospho-(1D-myo-inositol-5-phosphate) + ATP = 1,2-dihexadecanoyl-sn-glycero-3-phospho-(1D-myo-inositol-4,5-bisphosphate) + ADP + H(+). It carries out the reaction 1,2-dihexadecanoyl-sn-glycero-3-phospho-(1D-myo-inositol-5-phosphate) + GTP = 1,2-dihexadecanoyl-sn-glycero-3-phospho-(1D-myo-inositol-4,5-bisphosphate) + GDP + H(+). Functionally, participates in the biosynthesis of phosphatidylinositol 4,5-bisphosphate. Preferentially utilizes GTP, rather than ATP, for PI(5)P phosphorylation and its activity reflects changes in direct proportion to the physiological GTP concentration. Its GTP-sensing activity is critical for metabolic adaptation. PIP4Ks negatively regulate insulin signaling through a catalytic-independent mechanism. They interact with PIP5Ks and suppress PIP5K-mediated PtdIns(4,5)P2 synthesis and insulin-dependent conversion to PtdIns(3,4,5)P3. The sequence is that of Phosphatidylinositol 5-phosphate 4-kinase type-2 beta from Rattus norvegicus (Rat).